Consider the following 734-residue polypeptide: Origin of replication complex subunit 3 (734 aa).

Disordered stretches follow at residues 1 to 25 (MAPSGTVADPPQCSTTDSFNSSDTA) and 532 to 554 (GQRQGLPNSPKKHASRSNSKLEK). Positions 12–24 (QCSTTDSFNSSDT) are enriched in polar residues.

The protein belongs to the ORC3 family. In terms of assembly, component of the origin recognition complex (ORC) composed of at least ORC1 (ORC1A or ORC1B), ORC2, ORC3, ORC4, ORC5 and ORC6. ORC is regulated in a cell-cycle and development dependent manner. It is sequentially assembled at the exit from anaphase of mitosis and disassembled as cells enter S phase. Interacts directly with ORC1A, ORC2, ORC4, ORC5 and ORC6. Follow a cell-cycle regulation with a peak at the G1/S-phase. Mostly expressed in siliques and flowers, and, to a lower exent, in flower buds, leaves, roots and stems.

It localises to the nucleus. In terms of biological role, component of the origin recognition complex (ORC) that binds origins of replication. DNA-binding is ATP-dependent. The specific DNA sequences that define origins of replication have not been identified yet. This is Origin of replication complex subunit 3 from Arabidopsis thaliana (Mouse-ear cress).